Consider the following 340-residue polypeptide: Serpentine receptor class alpha-23 (340 aa).

The next 6 helical transmembrane spans lie at 34-54 (FISTIVLISYCFSWLAIQALW), 114-136 (YFYYLTNYFSTYSVFSLTFDRLI), 150-170 (FIAISLLVLQFLLAILSFYIA), 199-219 (VRTVVMVSCIIVTGFAYYLSV), 250-270 (ILIVLQFSCTMISSFGVNLLL), and 284-304 (VGAFLPGVAYANLCLPLAIYF).

This sequence belongs to the nematode receptor-like protein sra family.

It localises to the membrane. This is Serpentine receptor class alpha-23 (sra-23) from Caenorhabditis elegans.